A 95-amino-acid polypeptide reads, in one-letter code: Protein TusB (95 aa).

It belongs to the DsrH/TusB family. Heterohexamer, formed by a dimer of trimers. The hexameric TusBCD complex contains 2 copies each of TusB, TusC and TusD. The TusBCD complex interacts with TusE.

The protein localises to the cytoplasm. Functionally, part of a sulfur-relay system required for 2-thiolation of 5-methylaminomethyl-2-thiouridine (mnm(5)s(2)U) at tRNA wobble positions. This chain is Protein TusB, found in Erwinia tasmaniensis (strain DSM 17950 / CFBP 7177 / CIP 109463 / NCPPB 4357 / Et1/99).